The chain runs to 255 residues: uncharacterized protein (255 aa).

Positions 1 to 23 (MKRLNKLVLYISFLILVISFTAG) are cleaved as a signal peptide. C24 is lipidated: N-palmitoyl cysteine. C24 is lipidated: S-diacylglycerol cysteine.

It belongs to the staphylococcal tandem lipoprotein family.

It localises to the cell membrane. This is an uncharacterized protein from Staphylococcus aureus (strain N315).